The primary structure comprises 632 residues: 1-deoxy-D-xylulose-5-phosphate synthase (632 aa).

Residues H74 and 115-117 (AHS) each bind thiamine diphosphate. D146 lines the Mg(2+) pocket. Residues 147–148 (GA), N176, Y283, and E365 contribute to the thiamine diphosphate site. N176 lines the Mg(2+) pocket.

The protein belongs to the transketolase family. DXPS subfamily. In terms of assembly, homodimer. The cofactor is Mg(2+). Thiamine diphosphate is required as a cofactor.

It catalyses the reaction D-glyceraldehyde 3-phosphate + pyruvate + H(+) = 1-deoxy-D-xylulose 5-phosphate + CO2. It functions in the pathway metabolic intermediate biosynthesis; 1-deoxy-D-xylulose 5-phosphate biosynthesis; 1-deoxy-D-xylulose 5-phosphate from D-glyceraldehyde 3-phosphate and pyruvate: step 1/1. Its function is as follows. Catalyzes the acyloin condensation reaction between C atoms 2 and 3 of pyruvate and glyceraldehyde 3-phosphate to yield 1-deoxy-D-xylulose-5-phosphate (DXP). The polypeptide is 1-deoxy-D-xylulose-5-phosphate synthase (Paraburkholderia phymatum (strain DSM 17167 / CIP 108236 / LMG 21445 / STM815) (Burkholderia phymatum)).